The following is a 437-amino-acid chain: F-box/FBD/LRR-repeat protein At5g22700 (437 aa).

Positions 5–51 (GDRISSLPDELLCQILSNLPTKNAVTTSILSTRWRSIWLSTPVLDID) constitute an F-box domain. LRR repeat units lie at residues 86-113 (RDDV…EVDC), 134-160 (SLRL…HLEE), 161-186 (NIYY…TVVR), 187-210 (IVDI…KLVL), 215-240 (GWFI…SLKD), 272-297 (PVTF…TISG), and 322-350 (NARF…VLGL). The region spanning 361–406 (RVSSVPPCFLSSLEFVEIRSRLCRKRYVMKVARYFAKNSVMLKKFV) is the FBD domain.

This is F-box/FBD/LRR-repeat protein At5g22700 from Arabidopsis thaliana (Mouse-ear cress).